The chain runs to 240 residues: Large ribosomal subunit protein uL2 (240 aa).

Residues Met-1–Gly-11 show a composition bias toward polar residues. Disordered regions lie at residues Met-1–Lys-25 and Gly-207–Arg-240. Composition is skewed to basic residues over residues Gly-13–Lys-25 and Ser-224–Arg-240.

The protein belongs to the universal ribosomal protein uL2 family. As to quaternary structure, part of the 50S ribosomal subunit. Forms a bridge to the 30S subunit in the 70S ribosome.

Functionally, one of the primary rRNA binding proteins. Required for association of the 30S and 50S subunits to form the 70S ribosome, for tRNA binding and peptide bond formation. It has been suggested to have peptidyltransferase activity; this is somewhat controversial. Makes several contacts with the 16S rRNA in the 70S ribosome. The protein is Large ribosomal subunit protein uL2 of Methanococcus maripaludis (strain DSM 14266 / JCM 13030 / NBRC 101832 / S2 / LL).